Consider the following 75-residue polypeptide: Large ribosomal subunit protein bL31c (75 aa).

This sequence belongs to the bacterial ribosomal protein bL31 family. Type A subfamily. As to quaternary structure, part of the 50S ribosomal subunit.

The protein resides in the plastid. Its subcellular location is the chloroplast. Binds the 23S rRNA. The chain is Large ribosomal subunit protein bL31c from Cyanidium caldarium (Red alga).